The chain runs to 356 residues: Delta(7)-sterol 5(6)-desaturase (356 aa).

Helical transmembrane passes span 87-107 (LTLYLITWLFGVCVYYLFAGL), 134-154 (QANIAFPIMAIFTVPWFLAEV), and 171-191 (WYDYLQIPFFIAFTDLCIYWI). In terms of domain architecture, Fatty acid hydroxylase spans 179–303 (FFIAFTDLCI…FTTLWDRLGG (125 aa)). Positions 192-196 (HRGLH) match the Histidine box-1 motif. The short motif at 205 to 209 (HKPHH) is the Histidine box-2 element. The helical transmembrane segment at 235-255 (YIFPFLFPLSKIASVAFFVFV) threads the bilayer. A Histidine box-3 motif is present at residues 280–284 (HTMHH).

This sequence belongs to the sterol desaturase family. Fe cation serves as cofactor.

It localises to the endoplasmic reticulum membrane. The catalysed reaction is a Delta(7)-sterol + 2 Fe(II)-[cytochrome b5] + O2 + 2 H(+) = a Delta(5),Delta(7)-sterol + 2 Fe(III)-[cytochrome b5] + 2 H2O. The protein operates within steroid metabolism; ergosterol biosynthesis; ergosterol from zymosterol: step 3/5. Catalyzes the introduction of a C-5 double bond in the B ring of ergosterol. May contribute to the regulation of ergosterol biosynthesis. The polypeptide is Delta(7)-sterol 5(6)-desaturase (ERG3) (Leptosphaeria maculans (Blackleg fungus)).